Reading from the N-terminus, the 259-residue chain is MKTLAFCSFKGGTGKTTLSLNIGSNLAQVSRKKVLLVDLDPQANLTTGLGVQIQDDHSLNEILRHSNEIRRAIHKTKIENLDIIPSSVLVEDFRGLDKDISLSVNHLHLALQKVQDQYDVCILDTPPSLGILSQEAFLASDYLVVCLTPEPFSILGLQKIKEFCSTIGNNLDILGIVFSFWDERNSTNSTYMDIIETIYEGKILSSKIRRDVTVSRSLLKESSVINAYPNSRAAKDILNLTKEIENKLFSDEKLVQETL.

9–16 (FKGGTGKT) is an ATP binding site.

The protein belongs to the ParA family.

The chain is Virulence plasmid ParA family protein pGP5-D from Chlamydia psittaci (Chlamydophila psittaci).